The primary structure comprises 1450 residues: DNA-directed RNA polymerase RPB1 homolog (1450 aa).

It belongs to the RNA polymerase beta' chain family. Part of the viral DNA-directed RNA polymerase that consists of 8 polII-like subunits (RPB1, RPB2, RPB3, RPB5, RPB6, RPB7, RPB9, RPB10), a capping enzyme and a termination factor.

Its subcellular location is the virion. It carries out the reaction RNA(n) + a ribonucleoside 5'-triphosphate = RNA(n+1) + diphosphate. Its function is as follows. Catalytic component of the DNA-directed RNA polymerase (RNAP) that catalyzes the transcription in the cytoplasm of viral DNA into RNA using the four ribonucleoside triphosphates as substrates. Forms the polymerase active center together with RPB2. Part of the core element with the central large cleft, the clamp element that moves to open and close the cleft and the jaws that are thought to grab the incoming DNA template. This is DNA-directed RNA polymerase RPB1 homolog from African swine fever virus (isolate Pig/Kenya/KEN-50/1950) (ASFV).